The chain runs to 86 residues: Protein Tat (86 aa).

The segment at 1–24 is interaction with human CREBBP; sequence MEPVDPRLEPWKHPGSQPKTACTN. The segment at 1–48 is transactivation; the sequence is MEPVDPRLEPWKHPGSQPKTACTNCYCKKCCFHCQVCFITKALGISYG. Zn(2+) contacts are provided by Cys-22, Cys-25, and Cys-27. A cysteine-rich region spans residues 22-37; it reads CTNCYCKKCCFHCQVC. Position 28 is an N6-acetyllysine; by host PCAF (Lys-28). Zn(2+) is bound by residues Cys-30, His-33, Cys-34, and Cys-37. A core region spans residues 38 to 48; that stretch reads FITKALGISYG. The segment covering 48 to 59 has biased composition (basic residues); it reads GRKKRRQRRRAH. The tract at residues 48 to 86 is disordered; it reads GRKKRRQRRRAHQNSQTHQASLSKQPTSQPRGDPTGPKE. The Nuclear localization signal, RNA-binding (TAR), and protein transduction motif lies at 49 to 57; the sequence is RKKRRQRRR. The tract at residues 49 to 86 is interaction with the host capping enzyme RNGTT; it reads RKKRRQRRRAHQNSQTHQASLSKQPTSQPRGDPTGPKE. N6-acetyllysine; by host EP300 and GCN5L2 is present on residues Lys-50 and Lys-51. 2 positions are modified to asymmetric dimethylarginine; by host PRMT6: Arg-52 and Arg-53. The span at 60 to 77 shows a compositional bias: polar residues; the sequence is QNSQTHQASLSKQPTSQP. Residue Lys-71 forms a Glycyl lysine isopeptide (Lys-Gly) (interchain with G-Cter in ubiquitin) linkage. A Cell attachment site motif is present at residues 78 to 80; it reads RGD.

Belongs to the lentiviruses Tat family. In terms of assembly, interacts with host CCNT1. Associates with the P-TEFb complex composed at least of Tat, P-TEFb (CDK9 and CCNT1), TAR RNA, RNA Pol II. Recruits the HATs CREBBP, TAF1/TFIID, EP300, PCAF and GCN5L2. Interacts with host KAT5/Tip60; this interaction targets the latter to degradation. Interacts with the host deacetylase SIRT1. Interacts with host capping enzyme RNGTT; this interaction stimulates RNGTT. Binds to host KDR, and to the host integrins ITGAV/ITGB3 and ITGA5/ITGB1. Interacts with host KPNB1/importin beta-1 without previous binding to KPNA1/importin alpha-1. Interacts with EIF2AK2. Interacts with host nucleosome assembly protein NAP1L1; this interaction may be required for the transport of Tat within the nucleus, since the two proteins interact at the nuclear rim. Interacts with host C1QBP/SF2P32; this interaction involves lysine-acetylated Tat. Interacts with the host chemokine receptors CCR2, CCR3 and CXCR4. Interacts with host DPP4/CD26; this interaction may trigger an anti-proliferative effect. Interacts with host LDLR. Interacts with the host extracellular matrix metalloproteinase MMP1. Interacts with host PRMT6; this interaction mediates Tat's methylation. Interacts with, and is ubiquitinated by MDM2/Hdm2. Interacts with host PSMC3 and HTATIP2. Interacts with STAB1; this interaction may overcome SATB1-mediated repression of IL2 and IL2RA (interleukin) in T cells by binding to the same domain than HDAC1. Interacts (when acetylated) with human CDK13, thereby increasing HIV-1 mRNA splicing and promoting the production of the doubly spliced HIV-1 protein Nef. Interacts with host TBP; this interaction modulates the activity of transcriptional pre-initiation complex. Interacts with host RELA. Interacts with host PLSCR1; this interaction negatively regulates Tat transactivation activity by altering its subcellular distribution. Asymmetrical arginine methylation by host PRMT6 seems to diminish the transactivation capacity of Tat and affects the interaction with host CCNT1. In terms of processing, acetylation by EP300, CREBBP, GCN5L2/GCN5 and PCAF regulates the transactivation activity of Tat. EP300-mediated acetylation of Lys-50 promotes dissociation of Tat from the TAR RNA through the competitive binding to PCAF's bromodomain. In addition, the non-acetylated Tat's N-terminus can also interact with PCAF. PCAF-mediated acetylation of Lys-28 enhances Tat's binding to CCNT1. Lys-50 is deacetylated by SIRT1. Post-translationally, polyubiquitination by host MDM2 does not target Tat to degradation, but activates its transactivation function and fosters interaction with CCNT1 and TAR RNA. Phosphorylated by EIF2AK2 on serine and threonine residues adjacent to the basic region important for TAR RNA binding and function. Phosphorylation of Tat by EIF2AK2 is dependent on the prior activation of EIF2AK2 by dsRNA.

It is found in the host nucleus. It localises to the host nucleolus. The protein resides in the host cytoplasm. Its subcellular location is the secreted. In terms of biological role, transcriptional activator that increases RNA Pol II processivity, thereby increasing the level of full-length viral transcripts. Recognizes a hairpin structure at the 5'-LTR of the nascent viral mRNAs referred to as the transactivation responsive RNA element (TAR) and recruits the cyclin T1-CDK9 complex (P-TEFb complex) that will in turn hyperphosphorylate the RNA polymerase II to allow efficient elongation. The CDK9 component of P-TEFb and other Tat-activated kinases hyperphosphorylate the C-terminus of RNA Pol II that becomes stabilized and much more processive. Other factors such as HTATSF1/Tat-SF1, SUPT5H/SPT5, and HTATIP2 are also important for Tat's function. Besides its effect on RNA Pol II processivity, Tat induces chromatin remodeling of proviral genes by recruiting the histone acetyltransferases (HATs) CREBBP, EP300 and PCAF to the chromatin. This also contributes to the increase in proviral transcription rate, especially when the provirus integrates in transcriptionally silent region of the host genome. To ensure maximal activation of the LTR, Tat mediates nuclear translocation of NF-kappa-B by interacting with host RELA. Through its interaction with host TBP, Tat may also modulate transcription initiation. Tat can reactivate a latently infected cell by penetrating in it and transactivating its LTR promoter. In the cytoplasm, Tat is thought to act as a translational activator of HIV-1 mRNAs. Extracellular circulating Tat can be endocytosed by surrounding uninfected cells via the binding to several surface receptors such as CD26, CXCR4, heparan sulfate proteoglycans (HSPG) or LDLR. Neurons are rarely infected, but they internalize Tat via their LDLR. Through its interaction with nuclear HATs, Tat is potentially able to control the acetylation-dependent cellular gene expression. Modulates the expression of many cellular genes involved in cell survival, proliferation or in coding for cytokines or cytokine receptors. Tat plays a role in T-cell and neurons apoptosis. Tat induced neurotoxicity and apoptosis probably contribute to neuroAIDS. Circulating Tat also acts as a chemokine-like and/or growth factor-like molecule that binds to specific receptors on the surface of the cells, affecting many cellular pathways. In the vascular system, Tat binds to ITGAV/ITGB3 and ITGA5/ITGB1 integrins dimers at the surface of endothelial cells and competes with bFGF for heparin-binding sites, leading to an excess of soluble bFGF. In Homo sapiens (Human), this protein is Protein Tat.